The chain runs to 617 residues: DNA mismatch repair protein MutL (617 aa).

The protein belongs to the DNA mismatch repair MutL/HexB family.

This protein is involved in the repair of mismatches in DNA. It is required for dam-dependent methyl-directed DNA mismatch repair. May act as a 'molecular matchmaker', a protein that promotes the formation of a stable complex between two or more DNA-binding proteins in an ATP-dependent manner without itself being part of a final effector complex. This chain is DNA mismatch repair protein MutL, found in Bartonella tribocorum (strain CIP 105476 / IBS 506).